Reading from the N-terminus, the 734-residue chain is MELRFPRFSQGLAQDPTTRRIWFGIATAHDFESHDDITEERLYQNIFASHFGQLAIIFLWTSGNLFHVAWQGNFESWIQDPLHVRPIAHAIWDPHFGQPAVEAFTRGGAAGPVNIAYSGVYQWWYTIGLRTNEDLYTGALFLLFLSTLSLIASWLHLQPKWKPSLSWFKNAESRLNHHLSGLFGVSSLAWTGHLVHVAIPASRGEYVRWNNFLDVLPYPQGLGPLLTGQWNLYAQNPDSSNHLFGTAQGAGTAILTLLGGFHPQTQSLWLTDMAHHHLAIAFIFLIAGHMYRTNFGIGHSIKDLLEAHTPPGGRLGRGHKGLYDTINNSIHFQLGLALASLGVITSLVAQHMYSLPPYAFIAQDFTTQAALYTHHQYIAGFIMTGAFAHGAIFFIRDYNPEQNEDNVLARMLDHKEAIISHLSWASLFLGFHTLGLYVHNDVMLAFGTPEKQILIEPIFAQWIQSAHGKTTYGFDILLSSTNGPAFNAGRSLWLPGWLNAVNENSNSLFLTIGPGDFLVHHAIALGLHTTTLILVKGALDARGSKLMPDKKDFGYSFPCDGPGRGGTCDISAWDAFYLAVFWMLNTIGWVTFYWHWKHITLWQGNVSQFNESSTYLMGWLRDYLWLNSSQLINGYNPFGMNSLSVWAWMFLFGHLVWATGFMFLISWRGYWQELIETLAWAHERTPLANLIRWRDKPVALSIVQARLVGLAHFSVGYIFTYAAFLIASTSGKFG.

Helical transmembrane passes span I46–A69, L135–Q158, L175–I199, M273–Y291, I330–Y353, A369–I395, A417–H439, and F517–V535. Residues C559 and C568 each contribute to the [4Fe-4S] cluster site. The next 2 helical transmembrane spans lie at A575 to W596 and L643 to I665. Residues H654, M662, and Y670 each contribute to the chlorophyll a site. Residue W671 participates in phylloquinone binding. The helical transmembrane segment at L707–A727 threads the bilayer.

Belongs to the PsaA/PsaB family. The PsaA/B heterodimer binds the P700 chlorophyll special pair and subsequent electron acceptors. PSI consists of a core antenna complex that captures photons, and an electron transfer chain that converts photonic excitation into a charge separation. The eukaryotic PSI reaction center is composed of at least 11 subunits. It depends on P700 is a chlorophyll a/chlorophyll a' dimer, A0 is one or more chlorophyll a, A1 is one or both phylloquinones and FX is a shared 4Fe-4S iron-sulfur center. as a cofactor.

The protein resides in the plastid. Its subcellular location is the chloroplast thylakoid membrane. It catalyses the reaction reduced [plastocyanin] + hnu + oxidized [2Fe-2S]-[ferredoxin] = oxidized [plastocyanin] + reduced [2Fe-2S]-[ferredoxin]. In terms of biological role, psaA and PsaB bind P700, the primary electron donor of photosystem I (PSI), as well as the electron acceptors A0, A1 and FX. PSI is a plastocyanin-ferredoxin oxidoreductase, converting photonic excitation into a charge separation, which transfers an electron from the donor P700 chlorophyll pair to the spectroscopically characterized acceptors A0, A1, FX, FA and FB in turn. Oxidized P700 is reduced on the lumenal side of the thylakoid membrane by plastocyanin. This is Photosystem I P700 chlorophyll a apoprotein A2 from Hordeum vulgare (Barley).